Here is a 94-residue protein sequence, read N- to C-terminus: UPF0298 protein SZO_03600 (94 aa).

The protein belongs to the UPF0298 family.

It is found in the cytoplasm. The polypeptide is UPF0298 protein SZO_03600 (Streptococcus equi subsp. zooepidemicus (strain H70)).